Consider the following 409-residue polypeptide: UDP-N-acetylglucosamine--N-acetylmuramyl-(pentapeptide) pyrophosphoryl-undecaprenol N-acetylglucosamine transferase (409 aa).

UDP-N-acetyl-alpha-D-glucosamine is bound by residues 11–13 (TGG), Asn-125, Arg-169, Ser-199, and Gln-299.

It belongs to the glycosyltransferase 28 family. MurG subfamily.

Its subcellular location is the cell membrane. The enzyme catalyses di-trans,octa-cis-undecaprenyl diphospho-N-acetyl-alpha-D-muramoyl-L-alanyl-D-glutamyl-meso-2,6-diaminopimeloyl-D-alanyl-D-alanine + UDP-N-acetyl-alpha-D-glucosamine = di-trans,octa-cis-undecaprenyl diphospho-[N-acetyl-alpha-D-glucosaminyl-(1-&gt;4)]-N-acetyl-alpha-D-muramoyl-L-alanyl-D-glutamyl-meso-2,6-diaminopimeloyl-D-alanyl-D-alanine + UDP + H(+). The protein operates within cell wall biogenesis; peptidoglycan biosynthesis. Cell wall formation. Catalyzes the transfer of a GlcNAc subunit on undecaprenyl-pyrophosphoryl-MurNAc-pentapeptide (lipid intermediate I) to form undecaprenyl-pyrophosphoryl-MurNAc-(pentapeptide)GlcNAc (lipid intermediate II). This Clostridioides difficile (strain 630) (Peptoclostridium difficile) protein is UDP-N-acetylglucosamine--N-acetylmuramyl-(pentapeptide) pyrophosphoryl-undecaprenol N-acetylglucosamine transferase.